Reading from the N-terminus, the 20-residue chain is DELTA-actitoxin-Afr1b (20 aa).

It belongs to the actinoporin family. Sea anemone subfamily. As to quaternary structure, octamer or nonamer in membranes. Monomer in the soluble state.

It is found in the secreted. It localises to the nematocyst. The protein resides in the target cell membrane. Pore-forming toxin (PFT) that consists of a crown-shaped octamer or nonamer that forms cation-selective hydrophilic pores of about 1.5 nm (inside) and 13 nm (outside) and causes cytolysis. It causes cardiac stimulation. Also causes hemolysis (HC(50)=0.4 nM). Interestingly, the Phe-16 is crucial for hemolysis. Pore formation is a multi-step process that involves specific recognition of membrane sphingomyelin (but neither cholesterol nor phosphatidylcholine) using aromatic rich region and adjacent phosphocholine (POC) binding site, firm binding to the membrane (mainly driven by hydrophobic interactions) accompanied by the transfer of the N-terminal region to the lipid-water interface and finally pore formation after oligomerization of monomers. It is probable that a dimeric form is an assembly intermediate before the complete oligomerization. The formation of stable pores occurs only in vesicles composed of DOPC/SM (there is no oligomerization when the PFT is treated with vesicles of DOPC or SM alone). The transmembrane pore displays 8 lateral perforations, one at each subunit-subunit interface, partially occupied by the acyl-chain region of a bridging lipid. Each pore contains 24 lipid molecules, firmly bound to each subunit, that is, 3 lipids (L1, L2, L3, L4 and/or L5) are associated to each subunit. Lipid L1 bridges 2 subunits, whereas lipids L2 and L3 bind to sites at single subunit. This is DELTA-actitoxin-Afr1b from Actinia fragacea (Strawberry anemone).